Consider the following 206-residue polypeptide: Small ribosomal subunit protein uS4 (206 aa).

Residues 98–155 (TRLDNVVYRLGWALSRAQARQIVSHGKIAVNGKRVNIPSYNLKPGDVVELLDKDLIPV) enclose the S4 RNA-binding domain.

This sequence belongs to the universal ribosomal protein uS4 family. As to quaternary structure, part of the 30S ribosomal subunit. Contacts protein S5. The interaction surface between S4 and S5 is involved in control of translational fidelity.

Functionally, one of the primary rRNA binding proteins, it binds directly to 16S rRNA where it nucleates assembly of the body of the 30S subunit. In terms of biological role, with S5 and S12 plays an important role in translational accuracy. The chain is Small ribosomal subunit protein uS4 from Dictyoglomus turgidum (strain DSM 6724 / Z-1310).